Consider the following 968-residue polypeptide: MPFALGQRWISDTESELGLGTVVQVEGRMVTVLFPATGENRMFSRAEAPLTRVTYNSGDTVESHEGWSLTIEELTEKDGLVIYHGIHSETGEQVTLRETLLNHNIRFNKPQDRLFAGQIDRLDRFGVRYQCQMLRHKLATSDLLGLQGPRVGLIPHQMWIAHEVGRRYAPRVLLADEVGLGKTIEAGLIIHQQLLTGRAERVLVIVPDTLRHQWLVEMLRRFNLRFSVFDEDRCVEAYADHDNPFYTEQLVICSLELLRKKKRLDQALDADWDLLVVDEAHHLEWTEEAPSRAYQVVEALSEVVPGVLLLTATPDQLGHESHFARLRLLDPDRFYDYDAFLAEEDSYKDVAMAAEALAGNAKLPDAAINSLTELLSEKDIAPSIRLIQADGIDSELQQAARSELLQELLDRHGTGRVLYRNSRASVKGFPKRFFNPHPQTMPEQYLTAARVSSMMGGHKTLEAKAAQALSPEKLYQEFEDNSASWWKFDPRVDWLIAFLKSHRSKKVLIIASQAETALSLEEALRTREGIQATVFHEGMSIIERDKAGAYFAQEEGGAQALICSEIGSEGRNFQFASHLVLFDLPLNPDLLEQRIGRLDRIGQKNDIQIHLPYLEDTAQERLMQWYHQGLNAFELTCPSGHVLYAEFAEDLLNVLVGDDADELTNLLNHTQTRYKELKHAMEQGRDKLLEINSHGGDRAKAIVERLAQNDENTQLIGSVIRLWDIIGVDQEDKGENSIILRPSEHMMFPTYPGLPEDGVTVTFDRDTALSRDDIALITQEHPLVQTGLDLITGSETGTTSVAVLKNKALPAGTLFLELIYMADASAPKSSQLYRYLPPTPIRILLDKNGNDLSAKVDYASFDKQLSAVNRHIGGKLVTASQPILHPLFAKGEEYAQAAVDELVIQAREKMTTQLTGELDRLESLKAVNPNIREEELEYLRNQMQELNTYLDASQLQLDAIRMVLVSHV.

The Helicase ATP-binding domain occupies 163 to 332 (EVGRRYAPRV…FARLRLLDPD (170 aa)). 176 to 183 (DEVGLGKT) provides a ligand contact to ATP. Positions 278–281 (DEAH) match the DEAH box motif. The region spanning 491 to 643 (RVDWLIAFLK…ELTCPSGHVL (153 aa)) is the Helicase C-terminal domain.

It belongs to the SNF2/RAD54 helicase family. RapA subfamily. As to quaternary structure, interacts with the RNAP. Has a higher affinity for the core RNAP than for the holoenzyme. Its ATPase activity is stimulated by binding to RNAP.

Its function is as follows. Transcription regulator that activates transcription by stimulating RNA polymerase (RNAP) recycling in case of stress conditions such as supercoiled DNA or high salt concentrations. Probably acts by releasing the RNAP, when it is trapped or immobilized on tightly supercoiled DNA. Does not activate transcription on linear DNA. Probably not involved in DNA repair. This is RNA polymerase-associated protein RapA from Shewanella putrefaciens (strain CN-32 / ATCC BAA-453).